We begin with the raw amino-acid sequence, 93 residues long: HIG1 domain family member 1A, mitochondrial (93 aa).

At S2 the chain carries N-acetylserine. The HIG1 domain occupies 2 to 93 (STNTDLSLSS…YQEFWAKRKP (92 aa)). S8 is subject to Phosphoserine. Helical transmembrane passes span 28–48 (PFVP…LYKL) and 69–89 (GFVV…EFWA). Over 90–93 (KRKP) the chain is Mitochondrial matrix.

In terms of assembly, associates with cytochrome c oxidase (COX, complex IV); proposed complex component. Also associates with respiratory chain supercomplexes. In terms of tissue distribution, expressed in brain and spinal cord.

It localises to the mitochondrion membrane. It is found in the mitochondrion inner membrane. Proposed subunit of cytochrome c oxidase (COX, complex IV), which is the terminal component of the mitochondrial respiratory chain that catalyzes the reduction of oxygen to water. May play a role in the assembly of respiratory supercomplexes. This Rattus norvegicus (Rat) protein is HIG1 domain family member 1A, mitochondrial (Higd1a).